The following is a 233-amino-acid chain: Tetrahydromethanopterin S-methyltransferase subunit D (233 aa).

Transmembrane regions (helical) follow at residues 4-24, 39-59, 67-87, 133-153, 166-186, and 209-229; these read LLLI…VHFV, VGTG…ITAA, LMIM…TMLV, FVSG…IYWA, MGAA…NAVI, and GIVA…LLVY.

This sequence belongs to the MtrD family. In terms of assembly, the complex is composed of 8 subunits; MtrA, MtrB, MtrC, MtrD, MtrE, MtrF, MtrG and MtrH.

The protein resides in the cell membrane. The enzyme catalyses 5-methyl-5,6,7,8-tetrahydromethanopterin + coenzyme M + 2 Na(+)(in) = 5,6,7,8-tetrahydromethanopterin + methyl-coenzyme M + 2 Na(+)(out). The protein operates within one-carbon metabolism; methanogenesis from CO(2); methyl-coenzyme M from 5,10-methylene-5,6,7,8-tetrahydromethanopterin: step 2/2. Part of a complex that catalyzes the formation of methyl-coenzyme M and tetrahydromethanopterin from coenzyme M and methyl-tetrahydromethanopterin. This is an energy-conserving, sodium-ion translocating step. This chain is Tetrahydromethanopterin S-methyltransferase subunit D, found in Methanothermobacter marburgensis (strain ATCC BAA-927 / DSM 2133 / JCM 14651 / NBRC 100331 / OCM 82 / Marburg) (Methanobacterium thermoautotrophicum).